The following is a 2221-amino-acid chain: RNA-directed RNA polymerase L (2221 aa).

Residues 29–292 (KTVLLSQVNF…SERETLIEAE (264 aa)) are endonuclease. The Mn(2+) site is built by E54, D91, and E104. K117 is a catalytic residue. The region spanning 1171–1369 (LDMKSVVRLS…YLSSKLNKFI (199 aa)) is the RdRp catalytic domain. Mg(2+) is bound at residue D1327.

This sequence belongs to the Bunyavirales RNA polymerase family. In terms of assembly, homomultimer; the oligomeric structure is essential for the polymerase activity. Interacts with nucleoprotein N. Interacts with protein Z; this interaction inhibits viral transcription and replication, Z partially blocks the product exit tunnel for the releasing nascent RNA product. Mn(2+) is required as a cofactor. It depends on Mg(2+) as a cofactor.

The protein localises to the virion. It is found in the host cytoplasm. The enzyme catalyses RNA(n) + a ribonucleoside 5'-triphosphate = RNA(n+1) + diphosphate. RNA-dependent RNA polymerase, which is responsible for the replication and transcription of the viral RNA genome using antigenomic RNA as an intermediate. During transcription, synthesizes subgenomic RNAs and assures their capping by a cap-snatching mechanism, which involves the endonuclease activity cleaving the host capped pre-mRNAs. These short capped RNAs are then used as primers for viral transcription. The 3'-end of subgenomic mRNAs molecules are heterogeneous and not polyadenylated. The replicase function is to direct synthesis of antigenomic and genomic RNA which are encapsidated and non capped. As a consequence of the use of the same enzyme for both transcription and replication, these mechanisms need to be well coordinated. These processes may be regulated by proteins N and Z in a dose-dependent manner. Z protein inhibits the viral polymerase L und thus the viral transcription and RNA synthesis. In Sigmodon hispidus (Hispid cotton rat), this protein is RNA-directed RNA polymerase L.